We begin with the raw amino-acid sequence, 174 residues long: Peptidyl-prolyl cis-trans isomerase D, mitochondrial (174 aa).

Positions 10-173 (FFQIKQGNTP…AACVIEDCGQ (164 aa)) constitute a PPIase cyclophilin-type domain.

It belongs to the cyclophilin-type PPIase family. PPIase D subfamily.

The protein resides in the mitochondrion. It catalyses the reaction [protein]-peptidylproline (omega=180) = [protein]-peptidylproline (omega=0). Binds cyclosporin A (CsA). CsA mediates some of its effects via an inhibitory action on PPIase. Its function is as follows. PPIases accelerate the folding of proteins. It catalyzes the cis-trans isomerization of proline imidic peptide bonds in oligopeptides. This chain is Peptidyl-prolyl cis-trans isomerase D, mitochondrial (cypD), found in Dictyostelium discoideum (Social amoeba).